A 225-amino-acid polypeptide reads, in one-letter code: Protein-L-isoaspartate O-methyltransferase (225 aa).

Ser-75 is a catalytic residue.

Belongs to the methyltransferase superfamily. L-isoaspartyl/D-aspartyl protein methyltransferase family.

It localises to the cytoplasm. It carries out the reaction [protein]-L-isoaspartate + S-adenosyl-L-methionine = [protein]-L-isoaspartate alpha-methyl ester + S-adenosyl-L-homocysteine. In terms of biological role, catalyzes the methyl esterification of L-isoaspartyl residues in peptides and proteins that result from spontaneous decomposition of normal L-aspartyl and L-asparaginyl residues. It plays a role in the repair and/or degradation of damaged proteins. This chain is Protein-L-isoaspartate O-methyltransferase, found in Stenotrophomonas maltophilia (strain K279a).